A 101-amino-acid polypeptide reads, in one-letter code: uncharacterized protein (101 aa).

This is an uncharacterized protein from Schizosaccharomyces pombe (strain 972 / ATCC 24843) (Fission yeast).